The following is a 129-amino-acid chain: Glycine cleavage system H protein (129 aa).

Positions Thr-24–Lys-106 constitute a Lipoyl-binding domain. Lys-65 carries the N6-lipoyllysine modification.

It belongs to the GcvH family. The glycine cleavage system is composed of four proteins: P, T, L and H. (R)-lipoate serves as cofactor.

Its function is as follows. The glycine cleavage system catalyzes the degradation of glycine. The H protein shuttles the methylamine group of glycine from the P protein to the T protein. This chain is Glycine cleavage system H protein, found in Cronobacter sakazakii (strain ATCC BAA-894) (Enterobacter sakazakii).